A 208-amino-acid polypeptide reads, in one-letter code: MRMNIVQKILSATCFALLPLLAHAGAVDQLHDFLKNTRTLKAEFSQAVISRNGRKPQQSSGTIAISRPGKLRWEIVKPFPQLVVGDGEKIWIHDPELQQVTVRKAGQAIGSSPAALLSGNNDLEKNFTLKDAGEAEGMAWVDATPKAGDSGFEKVRLGFSGGDLRAMELFDSFGQTTQIRFSKIERNPALPAATFKFTPPAGADVVGE.

A signal peptide spans 1-24; sequence MRMNIVQKILSATCFALLPLLAHA.

Belongs to the LolA family. In terms of assembly, monomer.

Its subcellular location is the periplasm. Its function is as follows. Participates in the translocation of lipoproteins from the inner membrane to the outer membrane. Only forms a complex with a lipoprotein if the residue after the N-terminal Cys is not an aspartate (The Asp acts as a targeting signal to indicate that the lipoprotein should stay in the inner membrane). The chain is Outer-membrane lipoprotein carrier protein from Dechloromonas aromatica (strain RCB).